The sequence spans 761 residues: Probable beta-galactosidase 2 (761 aa).

Positions 1–23 (MGTIKNNFQLLWLILLIVVLVNG) are cleaved as a signal peptide. 2 N-linked (GlcNAc...) asparagine glycosylation sites follow: Asn-39 and Asn-110. Glu-195 serves as the catalytic Proton donor. Asn-206 carries an N-linked (GlcNAc...) asparagine glycan. Glu-267 serves as the catalytic Nucleophile. Residues Asn-385, Asn-405, Asn-438, Asn-501, Asn-552, Asn-553, Asn-577, Asn-592, Asn-642, Asn-690, and Asn-696 are each glycosylated (N-linked (GlcNAc...) asparagine).

It belongs to the glycosyl hydrolase 35 family.

The enzyme catalyses Hydrolysis of terminal non-reducing beta-D-galactose residues in beta-D-galactosides.. Its function is as follows. Cleaves beta-linked terminal galactosyl residues from gangliosides, glycoproteins, and glycosaminoglycans. The polypeptide is Probable beta-galactosidase 2 (glb2) (Dictyostelium discoideum (Social amoeba)).